A 146-amino-acid chain; its full sequence is Aspartate 1-decarboxylase (146 aa).

Serine 25 acts as the Schiff-base intermediate with substrate; via pyruvic acid in catalysis. Serine 25 carries the post-translational modification Pyruvic acid (Ser). Threonine 57 is a substrate binding site. Tyrosine 58 acts as the Proton donor in catalysis. 73–75 serves as a coordination point for substrate; that stretch reads GPA.

Belongs to the PanD family. In terms of assembly, heterooctamer of four alpha and four beta subunits. Pyruvate is required as a cofactor. Is synthesized initially as an inactive proenzyme, which is activated by self-cleavage at a specific serine bond to produce a beta-subunit with a hydroxyl group at its C-terminus and an alpha-subunit with a pyruvoyl group at its N-terminus.

It localises to the cytoplasm. The enzyme catalyses L-aspartate + H(+) = beta-alanine + CO2. Its pathway is cofactor biosynthesis; (R)-pantothenate biosynthesis; beta-alanine from L-aspartate: step 1/1. Its function is as follows. Catalyzes the pyruvoyl-dependent decarboxylation of aspartate to produce beta-alanine. In Salinibacter ruber (strain DSM 13855 / M31), this protein is Aspartate 1-decarboxylase.